The primary structure comprises 131 residues: Squamosa promoter-binding-like protein 3 (131 aa).

Positions 1–17 (MSMRRSKAEGKRSLREL) are enriched in basic and acidic residues. The disordered stretch occupies residues 1–54 (MSMRRSKAEGKRSLRELSEEEEEEEETEDEDTFEEEEALEKKQKGKATSSSGVC). The span at 18–38 (SEEEEEEEETEDEDTFEEEEA) shows a compositional bias: acidic residues. Positions 45-129 (GKATSSSGVC…GHNERRRKST (85 aa)) are sufficient and necessary for DNA binding. Residues 51–128 (SGVCQVESCT…AGHNERRRKS (78 aa)) form an SBP-type zinc finger. Zn(2+) contacts are provided by Cys-54, Cys-59, Cys-76, His-79, Cys-95, Cys-98, His-102, and Cys-114. Positions 111-127 (KRSCRRRLAGHNERRRK) match the Bipartite nuclear localization signal motif.

Zn(2+) is required as a cofactor. Expressed in vegetative and inflorescence apical meristems, floral meristems, leaf and flower organ primordia, inflorescence stem tissue and to lower extent in roots.

Its subcellular location is the nucleus. It is found in the cytoplasm. Trans-acting factor that binds specifically to the consensus nucleotide sequence 5'-TNCGTACAA-3' of AP1 promoter. Binds specifically to the 5'-GTAC-3' core sequence. Promotes both vegetative phase change and flowering. Regulates phase-specific patterns of leaf epidermal differentiation and flowering time, but does not seem to affect leaf shape. This is Squamosa promoter-binding-like protein 3 (SPL3) from Arabidopsis thaliana (Mouse-ear cress).